A 182-amino-acid chain; its full sequence is Thioredoxin X, chloroplastic (182 aa).

A chloroplast-targeting transit peptide spans 1 to 67; the sequence is MDSIVSSSTI…TRKSSSSVIR (67 aa). In terms of domain architecture, Thioredoxin spans 68 to 177; that stretch reads CGGIKEIGES…LKEYIDGLLN (110 aa). Residues C99 and C102 each act as nucleophile in the active site. C99 and C102 form a disulfide bridge.

This sequence belongs to the thioredoxin family. As to expression, predominantly expressed in leaves.

The protein localises to the plastid. The protein resides in the chloroplast stroma. In terms of biological role, probable thiol-disulfide oxidoreductase that may participate in various redox reactions. The protein is Thioredoxin X, chloroplastic (ATHX) of Arabidopsis thaliana (Mouse-ear cress).